The primary structure comprises 318 residues: Trans-prenyltransferase (318 aa).

A helical transmembrane segment spans residues 1–21 (MLHLIYISIIVVLIIILISYT). Positions 85, 88, and 122 each coordinate isopentenyl diphosphate. Positions 129 and 135 each coordinate Mg(2+). A dimethylallyl diphosphate-binding site is contributed by R140. An isopentenyl diphosphate-binding site is contributed by R141. Residues K216, T217, and Q254 each coordinate dimethylallyl diphosphate.

Belongs to the FPP/GGPP synthase family. Asfivirus trans-prenyltransferase subfamily. Requires Mg(2+) as cofactor.

It is found in the host endoplasmic reticulum. Its subcellular location is the host membrane. The enzyme catalyses isopentenyl diphosphate + dimethylallyl diphosphate = (2E)-geranyl diphosphate + diphosphate. The catalysed reaction is isopentenyl diphosphate + (2E)-geranyl diphosphate = (2E,6E)-farnesyl diphosphate + diphosphate. It carries out the reaction isopentenyl diphosphate + (2E,6E)-farnesyl diphosphate = (2E,6E,10E)-geranylgeranyl diphosphate + diphosphate. It catalyses the reaction isopentenyl diphosphate + (2E,6E,10E)-geranylgeranyl diphosphate = (2E,6E,10E,14E)-geranylfarnesyl diphosphate + diphosphate. The protein operates within isoprenoid biosynthesis; farnesyl diphosphate biosynthesis; farnesyl diphosphate from geranyl diphosphate and isopentenyl diphosphate: step 1/1. It participates in isoprenoid biosynthesis; geranyl diphosphate biosynthesis; geranyl diphosphate from dimethylallyl diphosphate and isopentenyl diphosphate: step 1/1. Its pathway is isoprenoid biosynthesis; geranylgeranyl diphosphate biosynthesis; geranylgeranyl diphosphate from farnesyl diphosphate and isopentenyl diphosphate: step 1/1. Its function is as follows. Trans-prenyltransferase that catalyzes the sequential condensation of isopentenyl diphosphate (IPP) with different allylic diphosphates, such as dimethylallyl diphosphate (DMAPP), geranyl diphosphate (GPP), farnesyl diphosphate (FPP) and geranylgeranyl diphosphate (GGPP), farnesyl diphosphate being the best allylic substrate. This Ornithodoros (relapsing fever ticks) protein is Trans-prenyltransferase.